A 261-amino-acid chain; its full sequence is Kallikrein 1-related peptidase b11 (261 aa).

Positions 1–18 (MWFLILFLALSLGGIDAA) are cleaved as a signal peptide. Residues 19 to 24 (PPVQSR) constitute a propeptide, activation peptide. One can recognise a Peptidase S1 domain in the interval 25-258 (IVGGFNCEKN…FTNWIKDTMA (234 aa)). 5 disulfides stabilise this stretch: Cys-31-Cys-173, Cys-50-Cys-66, Cys-152-Cys-219, Cys-184-Cys-198, and Cys-209-Cys-234. The active-site Charge relay system is His-65. Residue Asn-102 is glycosylated (N-linked (GlcNAc...) asparagine). Asp-120 acts as the Charge relay system in catalysis. Ser-213 (charge relay system) is an active-site residue.

Belongs to the peptidase S1 family. Kallikrein subfamily.

It catalyses the reaction Preferential cleavage of Arg-|-Xaa bonds in small molecule substrates. Highly selective action to release kallidin (lysyl-bradykinin) from kininogen involves hydrolysis of Met-|-Xaa or Leu-|-Xaa.. Glandular kallikreins cleave Met-Lys and Arg-Ser bonds in kininogen to release Lys-bradykinin. This is Kallikrein 1-related peptidase b11 (Klk1b11) from Mus musculus (Mouse).